A 227-amino-acid polypeptide reads, in one-letter code: Acyl-protein thioesterase 1 (227 aa).

Active-site charge relay system residues include Ser-119, Asp-173, and His-207.

This sequence belongs to the AB hydrolase superfamily. AB hydrolase 2 family.

The protein localises to the cytoplasm. It is found in the nucleus. It catalyses the reaction S-hexadecanoyl-L-cysteinyl-[protein] + H2O = L-cysteinyl-[protein] + hexadecanoate + H(+). In terms of biological role, hydrolyzes fatty acids from S-acylated cysteine residues in proteins with a strong preference for palmitoylated G-alpha proteins over other acyl substrates. Mediates the deacylation of G-alpha proteins such as GPA1 in vivo, but has weak or no activity toward palmitoylated Ras proteins. Has weak lysophospholipase activity in vitro; however such activity may not exist in vivo. The chain is Acyl-protein thioesterase 1 from Yarrowia lipolytica (strain CLIB 122 / E 150) (Yeast).